The primary structure comprises 266 residues: Undecaprenyl-diphosphatase 3 (266 aa).

The next 8 membrane-spanning stretches (helical) occupy residues 4-24 (IEAF…FLPI), 43-63 (SGRA…CWLY), 86-106 (FSVL…VDFI), 109-129 (VLFS…IIFW), 145-165 (ITFK…IPGT), 186-206 (TEFS…YDLL), 219-239 (NIGL…KALV), and 246-266 (TLRV…FVML).

This sequence belongs to the UppP family.

It localises to the cell inner membrane. The catalysed reaction is di-trans,octa-cis-undecaprenyl diphosphate + H2O = di-trans,octa-cis-undecaprenyl phosphate + phosphate + H(+). Its function is as follows. Catalyzes the dephosphorylation of undecaprenyl diphosphate (UPP). Confers resistance to bacitracin. The polypeptide is Undecaprenyl-diphosphatase 3 (Acinetobacter baylyi (strain ATCC 33305 / BD413 / ADP1)).